Consider the following 362-residue polypeptide: Mitochondrial glycine transporter (362 aa).

Solcar repeat units follow at residues 22-108 (PDAT…MRTS), 132-236 (LTAM…FKND), and 269-354 (RSSI…LIKS). The next 6 helical transmembrane spans lie at 28-53 (LLAG…TRLQ), 83-109 (GTLP…RTSW), 138-163 (LTTG…TRFE), 211-234 (GSVA…EAFK), 273-299 (INST…KTRL), and 329-347 (GLSL…SWCI).

The protein belongs to the mitochondrial carrier (TC 2.A.29) family. SLC25A38 subfamily.

The protein resides in the mitochondrion inner membrane. It carries out the reaction glycine(in) = glycine(out). Its function is as follows. Mitochondrial glycine transporter that imports glycine into the mitochondrial matrix. Plays an important role in providing glycine for the first enzymatic step in heme biosynthesis, the condensation of glycine with succinyl-CoA to produce 5-aminolevulinate (ALA) in the mitochondrial matrix. The protein is Mitochondrial glycine transporter of Candida albicans (strain SC5314 / ATCC MYA-2876) (Yeast).